A 122-amino-acid polypeptide reads, in one-letter code: Large ribosomal subunit protein eL18 (122 aa).

This sequence belongs to the eukaryotic ribosomal protein eL18 family.

This chain is Large ribosomal subunit protein eL18, found in Picrophilus torridus (strain ATCC 700027 / DSM 9790 / JCM 10055 / NBRC 100828 / KAW 2/3).